The following is a 26-amino-acid chain: Probable early E4 17 kDa protein (26 aa).

This chain is Probable early E4 17 kDa protein, found in Homo sapiens (Human).